We begin with the raw amino-acid sequence, 227 residues long: Orotidine 5'-phosphate decarboxylase (227 aa).

Substrate is bound by residues aspartate 8, lysine 30, 59–68 (DLKLYDIPNT), threonine 118, arginine 178, glutamine 187, glycine 207, and arginine 208. The Proton donor role is filled by lysine 61.

Belongs to the OMP decarboxylase family. Type 1 subfamily. As to quaternary structure, homodimer.

It catalyses the reaction orotidine 5'-phosphate + H(+) = UMP + CO2. It participates in pyrimidine metabolism; UMP biosynthesis via de novo pathway; UMP from orotate: step 2/2. In terms of biological role, catalyzes the decarboxylation of orotidine 5'-monophosphate (OMP) to uridine 5'-monophosphate (UMP). The chain is Orotidine 5'-phosphate decarboxylase from Sulfurimonas denitrificans (strain ATCC 33889 / DSM 1251) (Thiomicrospira denitrificans (strain ATCC 33889 / DSM 1251)).